Here is a 72-residue protein sequence, read N- to C-terminus: Brevinin-2GHb (72 aa).

An N-terminal signal peptide occupies residues 1–22 (MFTMKKSLLLLFFLGTVSLSLC). A propeptide spanning residues 23-42 (EQERGADEDDGGEMTEELKR) is cleaved from the precursor. Residues Cys-66 and Cys-72 are joined by a disulfide bond.

As to expression, expressed by the skin glands.

The protein localises to the secreted. Its function is as follows. Antimicrobial peptide. Active against the Gram-positive bacteria S.aureus FDA209P (MIC=16.5 ug/ml) and B.subtilis ATCC 6633 (MIC&gt;64 ug/ml), and the Gram-negative bacteria E.coli O111 (MIC=8.2 ug/ml) and E.coli ATCC 25922 (MIC=8.2 ug/ml). Not active against the fungus C.albicans. This is Brevinin-2GHb from Sylvirana guentheri (Gunther's frog).